The sequence spans 784 residues: Protein translocase subunit SecA 2 (784 aa).

ATP-binding positions include Gln94, 112 to 116 (GEGKT), and Asp501.

This sequence belongs to the SecA family. As to quaternary structure, monomer and homodimer. Part of the essential Sec protein translocation apparatus which comprises SecA, SecYEG and auxiliary proteins SecDF. Other proteins may also be involved.

Its subcellular location is the cell membrane. It is found in the cytoplasm. The enzyme catalyses ATP + H2O + cellular proteinSide 1 = ADP + phosphate + cellular proteinSide 2.. In terms of biological role, part of the Sec protein translocase complex. Interacts with the SecYEG preprotein conducting channel. Has a central role in coupling the hydrolysis of ATP to the transfer of proteins into and across the cell membrane, serving as an ATP-driven molecular motor driving the stepwise translocation of polypeptide chains across the membrane. This chain is Protein translocase subunit SecA 2, found in Mycolicibacterium smegmatis (strain ATCC 700084 / mc(2)155) (Mycobacterium smegmatis).